The following is a 128-amino-acid chain: Glycine cleavage system H protein (128 aa).

In terms of domain architecture, Lipoyl-binding spans 23 to 105 (KVRIGITDFA…YEKAWMIVVE (83 aa)). Residue Lys-64 is modified to N6-lipoyllysine.

It belongs to the GcvH family. In terms of assembly, the glycine cleavage system is composed of four proteins: P, T, L and H. (R)-lipoate serves as cofactor.

In terms of biological role, the glycine cleavage system catalyzes the degradation of glycine. The H protein shuttles the methylamine group of glycine from the P protein to the T protein. Is also involved in protein lipoylation via its role as an octanoyl/lipoyl carrier protein intermediate. The sequence is that of Glycine cleavage system H protein from Halalkalibacterium halodurans (strain ATCC BAA-125 / DSM 18197 / FERM 7344 / JCM 9153 / C-125) (Bacillus halodurans).